Reading from the N-terminus, the 508-residue chain is Catalase (508 aa).

Residues 1–21 (MHMSKSFLLISMGLASISVHA) form the signal peptide. Residues His72 and Asn145 contribute to the active site. Residue Tyr353 coordinates heme. Positions 373 to 392 (PKSPVANHNQDGPSNNSTGL) are enriched in polar residues. Residues 373-396 (PKSPVANHNQDGPSNNSTGLGNVD) are disordered.

This sequence belongs to the catalase family. Requires heme as cofactor.

The protein resides in the periplasm. It catalyses the reaction 2 H2O2 = O2 + 2 H2O. Functionally, decomposes hydrogen peroxide into water and oxygen; serves to protect cells from the toxic effects of hydrogen peroxide. In Vibrio vulnificus (strain YJ016), this protein is Catalase.